Here is a 366-residue protein sequence, read N- to C-terminus: tRNA/tmRNA (uracil-C(5))-methyltransferase (366 aa).

Glutamine 190, tyrosine 218, asparagine 223, glutamate 239, and aspartate 299 together coordinate S-adenosyl-L-methionine. The active-site Nucleophile is cysteine 324. Catalysis depends on glutamate 358, which acts as the Proton acceptor.

The protein belongs to the class I-like SAM-binding methyltransferase superfamily. RNA M5U methyltransferase family. TrmA subfamily.

It carries out the reaction uridine(54) in tRNA + S-adenosyl-L-methionine = 5-methyluridine(54) in tRNA + S-adenosyl-L-homocysteine + H(+). The catalysed reaction is uridine(341) in tmRNA + S-adenosyl-L-methionine = 5-methyluridine(341) in tmRNA + S-adenosyl-L-homocysteine + H(+). Dual-specificity methyltransferase that catalyzes the formation of 5-methyluridine at position 54 (m5U54) in all tRNAs, and that of position 341 (m5U341) in tmRNA (transfer-mRNA). The polypeptide is tRNA/tmRNA (uracil-C(5))-methyltransferase (Cronobacter sakazakii (strain ATCC BAA-894) (Enterobacter sakazakii)).